Here is a 449-residue protein sequence, read N- to C-terminus: Bifunctional F420 biosynthesis protein FbiB (449 aa).

Positions 1-245 (MSPAGEHGTA…PGTEDLFWLG (245 aa)) are coenzyme F420:L-glutamate ligase. Residues 21-24 (LPEF), S51, and K56 contribute to the GTP site. D110 contacts a divalent metal cation. N113 is a GTP binding site. 2 residues coordinate a divalent metal cation: D151 and T152. The segment at 246-449 (TAEAIELGRR…ADPGDLLIRK (204 aa)) is dehydro-coenzyme F420-0 reductase. FMN contacts are provided by residues 261–265 (RRSVR) and A289. A coenzyme F420-(gamma-Glu)n-binding site is contributed by D321. FMN-binding residues include G400 and R437.

In the N-terminal section; belongs to the CofE family. The cofactor is Mg(2+). Mn(2+) is required as a cofactor. K(+) serves as cofactor.

The enzyme catalyses oxidized coenzyme F420-0 + GTP + L-glutamate = oxidized coenzyme F420-1 + GDP + phosphate + H(+). It carries out the reaction oxidized coenzyme F420-1 + GTP + L-glutamate = oxidized coenzyme F420-2 + GDP + phosphate + H(+). It catalyses the reaction oxidized coenzyme F420-(gamma-L-Glu)(n) + GTP + L-glutamate = oxidized coenzyme F420-(gamma-L-Glu)(n+1) + GDP + phosphate + H(+). The catalysed reaction is oxidized coenzyme F420-0 + FMN + H(+) = dehydro coenzyme F420-0 + FMNH2. It participates in cofactor biosynthesis; coenzyme F420 biosynthesis. In terms of biological role, bifunctional enzyme that catalyzes the GTP-dependent successive addition of multiple gamma-linked L-glutamates to the L-lactyl phosphodiester of 7,8-didemethyl-8-hydroxy-5-deazariboflavin (F420-0) to form polyglutamated F420 derivatives, and the FMNH2-dependent reduction of dehydro-F420-0 to form F420-0. The chain is Bifunctional F420 biosynthesis protein FbiB from Mycobacterium avium (strain 104).